The chain runs to 177 residues: Translation initiation factor IF-3 (177 aa).

The protein belongs to the IF-3 family. In terms of assembly, monomer.

Its subcellular location is the cytoplasm. Its function is as follows. IF-3 binds to the 30S ribosomal subunit and shifts the equilibrium between 70S ribosomes and their 50S and 30S subunits in favor of the free subunits, thus enhancing the availability of 30S subunits on which protein synthesis initiation begins. The sequence is that of Translation initiation factor IF-3 from Nostoc sp. (strain PCC 7120 / SAG 25.82 / UTEX 2576).